The following is a 392-amino-acid chain: Phosphoglycerate kinase (392 aa).

Substrate is bound by residues 21 to 23 (DMN), Arg-36, 59 to 62 (HLGR), Arg-114, and Arg-147. Residues Lys-198, Glu-320, and 346–349 (GGDT) contribute to the ATP site.

Belongs to the phosphoglycerate kinase family. In terms of assembly, monomer.

The protein localises to the cytoplasm. The enzyme catalyses (2R)-3-phosphoglycerate + ATP = (2R)-3-phospho-glyceroyl phosphate + ADP. It participates in carbohydrate degradation; glycolysis; pyruvate from D-glyceraldehyde 3-phosphate: step 2/5. This chain is Phosphoglycerate kinase, found in Neisseria meningitidis serogroup C / serotype 2a (strain ATCC 700532 / DSM 15464 / FAM18).